Consider the following 509-residue polypeptide: UDP-N-acetylmuramoyl-L-alanyl-D-glutamate--2,6-diaminopimelate ligase (509 aa).

Ser30 lines the UDP-N-acetyl-alpha-D-muramoyl-L-alanyl-D-glutamate pocket. 110-116 (GTNGKTT) serves as a coordination point for ATP. UDP-N-acetyl-alpha-D-muramoyl-L-alanyl-D-glutamate-binding positions include 152-153 (TT), Ser179, Gln185, and Arg187. Residue Lys219 is modified to N6-carboxylysine. Residues Arg385, 409–412 (DNPR), Gly476, and Glu480 each bind meso-2,6-diaminopimelate. Residues 409–412 (DNPR) carry the Meso-diaminopimelate recognition motif motif.

It belongs to the MurCDEF family. MurE subfamily. The cofactor is Mg(2+). Post-translationally, carboxylation is probably crucial for Mg(2+) binding and, consequently, for the gamma-phosphate positioning of ATP.

The protein localises to the cytoplasm. It carries out the reaction UDP-N-acetyl-alpha-D-muramoyl-L-alanyl-D-glutamate + meso-2,6-diaminopimelate + ATP = UDP-N-acetyl-alpha-D-muramoyl-L-alanyl-gamma-D-glutamyl-meso-2,6-diaminopimelate + ADP + phosphate + H(+). The protein operates within cell wall biogenesis; peptidoglycan biosynthesis. In terms of biological role, catalyzes the addition of meso-diaminopimelic acid to the nucleotide precursor UDP-N-acetylmuramoyl-L-alanyl-D-glutamate (UMAG) in the biosynthesis of bacterial cell-wall peptidoglycan. This chain is UDP-N-acetylmuramoyl-L-alanyl-D-glutamate--2,6-diaminopimelate ligase, found in Geobacter sulfurreducens (strain ATCC 51573 / DSM 12127 / PCA).